We begin with the raw amino-acid sequence, 453 residues long: uncharacterized protein (453 aa).

Disordered regions lie at residues 15–42 (LKRK…SETM) and 425–453 (TNEI…RHAK). The span at 425-437 (TNEISSSNNSGTA) shows a compositional bias: polar residues. The span at 443–453 (QNRKRNRRHAK) shows a compositional bias: basic residues.

This is an uncharacterized protein from Caenorhabditis elegans.